The primary structure comprises 912 residues: Probable dipeptidyl-aminopeptidase B (912 aa).

Disordered regions lie at residues methionine 1–leucine 30 and asparagine 48–aspartate 68. Over methionine 1–lysine 92 the chain is Cytoplasmic. Basic and acidic residues-rich tracts occupy residues glycine 7–aspartate 25 and threonine 54–serine 67. Residues isoleucine 93 to phenylalanine 113 traverse the membrane as a helical; Signal-anchor for type II membrane protein segment. Residues leucine 114–isoleucine 912 lie on the Vacuolar side of the membrane. Asparagine 130, asparagine 210, asparagine 346, asparagine 569, and asparagine 656 each carry an N-linked (GlcNAc...) asparagine glycan. Residue serine 751 is the Charge relay system of the active site. Residue asparagine 810 is glycosylated (N-linked (GlcNAc...) asparagine). Active-site charge relay system residues include aspartate 828 and histidine 861. Residue asparagine 897 is glycosylated (N-linked (GlcNAc...) asparagine).

This sequence belongs to the peptidase S9B family.

It localises to the vacuole membrane. The catalysed reaction is Release of an N-terminal dipeptide, Xaa-Yaa-|-Zaa-, from a polypeptide, preferentially when Yaa is Pro, provided Zaa is neither Pro nor hydroxyproline.. In terms of biological role, type IV dipeptidyl-peptidase which removes N-terminal dipeptides sequentially from polypeptides having unsubstituted N-termini provided that the penultimate residue is proline. In Paracoccidioides brasiliensis (strain Pb18), this protein is Probable dipeptidyl-aminopeptidase B (DAPB).